Here is a 568-residue protein sequence, read N- to C-terminus: Sulfite reductase [NADPH] hemoprotein beta-component (568 aa).

Residues Cys425, Cys431, Cys470, and Cys474 each contribute to the [4Fe-4S] cluster site. Cys474 contacts siroheme.

Belongs to the nitrite and sulfite reductase 4Fe-4S domain family. In terms of assembly, alpha(8)-beta(8). The alpha component is a flavoprotein, the beta component is a hemoprotein. Siroheme is required as a cofactor. [4Fe-4S] cluster serves as cofactor.

The enzyme catalyses hydrogen sulfide + 3 NADP(+) + 3 H2O = sulfite + 3 NADPH + 4 H(+). It functions in the pathway sulfur metabolism; hydrogen sulfide biosynthesis; hydrogen sulfide from sulfite (NADPH route): step 1/1. Component of the sulfite reductase complex that catalyzes the 6-electron reduction of sulfite to sulfide. This is one of several activities required for the biosynthesis of L-cysteine from sulfate. This chain is Sulfite reductase [NADPH] hemoprotein beta-component, found in Xanthomonas euvesicatoria pv. vesicatoria (strain 85-10) (Xanthomonas campestris pv. vesicatoria).